The primary structure comprises 134 residues: Cytochrome b5 (134 aa).

At A2 the chain carries N-acetylalanine. Residues K7, K10, and K19 each carry the N6-acetyllysine modification. The Cytochrome b5 heme-binding domain occupies 9-85 (VKYYTLEEIK…SKTFIIGELH (77 aa)). Positions 44 and 68 each coordinate heme. Residues 109-131 (WWTNWVIPAISALIVALMYRLYM) traverse the membrane as a helical segment.

It belongs to the cytochrome b5 family.

It is found in the endoplasmic reticulum membrane. The protein localises to the microsome membrane. In terms of biological role, cytochrome b5 is a membrane-bound hemoprotein functioning as an electron carrier for several membrane-bound oxygenases. This is Cytochrome b5 (CYB5A) from Oryctolagus cuniculus (Rabbit).